Reading from the N-terminus, the 315-residue chain is Small ribosomal subunit protein uS2 (315 aa).

The interval 241 to 315 (AQHGEERRPG…QPAPGSDANR (75 aa)) is disordered. The segment covering 243 to 288 (HGEERRPGEEDRDAASERGQKDRRDRRDRRGGGRDRERREPREDRA) has biased composition (basic and acidic residues).

It belongs to the universal ribosomal protein uS2 family.

The protein is Small ribosomal subunit protein uS2 of Anaeromyxobacter sp. (strain Fw109-5).